The chain runs to 130 residues: L-ectoine synthase (130 aa).

This sequence belongs to the ectoine synthase family.

It carries out the reaction (2S)-4-acetamido-2-aminobutanoate = L-ectoine + H2O. It participates in amine and polyamine biosynthesis; ectoine biosynthesis; L-ectoine from L-aspartate 4-semialdehyde: step 3/3. Its function is as follows. Catalyzes the circularization of gamma-N-acetyl-alpha,gamma-diaminobutyric acid (ADABA) to ectoine (1,4,5,6-tetrahydro-2-methyl-4-pyrimidine carboxylic acid), which is an excellent osmoprotectant. This Mycolicibacterium gilvum (strain PYR-GCK) (Mycobacterium gilvum (strain PYR-GCK)) protein is L-ectoine synthase.